A 1394-amino-acid chain; its full sequence is MEVLMAERADLVFHNKVIDGTAIKRLISRLIDHFGMAYTSHILDQLKTLGFQQATATSISLGIDDLLTIPSKGWLVQDAEQQSLILEKHHHYGNVHAVEKLRQSIEIWYATSEYLRQEMNPNFRMTDPFNPVHIMSFSGARGNASQVHQLVGMRGLMSDPQGQMIDLPIQSNLREGLSLTEYIISCYGARKGVVDTAVRTSDAGYLTRRLVEVVQHIVVRRTDCGTIRGILVSPGNRMIPERIFIQTLIGRVLADDIYMGPRCIGVRNQDIGIGLINRFITFQTQPISIRTPFTCRSTSWICRLCYGRSPTHGDLVELGEAVGIIAGQSIGEPGTQLTLRTFHTGGVFTGGTAEHIRAPSNGKIKFNEDLVHPTRTRHGHPAFLCYIDLYVTIESEDIIHNVTIPPKSLLLVQNDQYVESEQVIAEIRAGTYTLNLKERVRKHIYSDSEGEMHWSTDVYHAPEFTYSNVHLLPKTSHLWILSGGSCGCSLVPFSLYKDQDQINVHSLCVERRYISSLSVNNDKVGQKFYGPDLSGKNENGIPDYSELNPILCTGQSNLTYPAIFHGNSDLLAKRRRNGFIIQFESLQEREKELRPPSGISIEIPINGIFRRNSILAFFDDPQYRRNSSGITKYGTIGVHSILKKEDLIEYRGVKDFKPKYQMQMKVDRFFFIPEEVHILPESSSIMVRNNSIIGVATRLTLSIRSRVGGLVRVEKKKKRIELKIFSGDIHFPGEMDKISRHNGILIPPERVKKNSKKSKKSKNWIYVQWITPTKKKYFVFVRPVIIYELADGINLVKLFPQDLLQERDNLELRVANYILYGNGKPIRGISGTSIQLVRTCLLLNWDRDKKSSSIEDARASFVEVSTNGLVRNFLRIDLGKSDTAYIRKRKDPSGSGLIFNNESDRTNINPFFSIYSKTRVPQSPSQNQGTIRTLLNRNKERQSLIILSASNCLQIDLFNDVKDYNVIKESSKKDPLISIRNSLGPLGAAPQIVNFYSFYYLITHNPISLTKYLQLDNLKQIFQVLKYYLMDENGGILNSDPCINIVFNTFNLNWHFLHDNYHNNYCEETPTRISLGQFFFENVCIAKNRPHLKSGQIIIVQVDSLVIRSAKPYLATSGATVHRHYGEILYEGDTLVTFIYEKSRSGDITQGLPKVEQVLEVRSIDSISMSLEKRIEGWNERITRILGIPWGFLIGAELTIVQSRISLVNKIQKVYRSQGVEIHNRHIEIIVRQITSKVLVSEDGMSNVFSPGELIGLLRAERTGRALEEAICYRAVLLGITKASLNTQSFISEASFQETARVLAKAALRGRIDWLRGLKENVVLGGMIPVGTGFRELAHRSRQHNNIPLETPPKKIFEGEMRDILFHHKELFDFFISTNLHDTSEQEFLGFNDS.

Positions 224, 295, 302, and 305 each coordinate Zn(2+).

The protein belongs to the RNA polymerase beta' chain family. RpoC2 subfamily. As to quaternary structure, in plastids the minimal PEP RNA polymerase catalytic core is composed of four subunits: alpha, beta, beta', and beta''. When a (nuclear-encoded) sigma factor is associated with the core the holoenzyme is formed, which can initiate transcription. The cofactor is Zn(2+).

The protein localises to the plastid. Its subcellular location is the chloroplast. It carries out the reaction RNA(n) + a ribonucleoside 5'-triphosphate = RNA(n+1) + diphosphate. DNA-dependent RNA polymerase catalyzes the transcription of DNA into RNA using the four ribonucleoside triphosphates as substrates. The chain is DNA-directed RNA polymerase subunit beta'' from Cucumis sativus (Cucumber).